A 173-amino-acid polypeptide reads, in one-letter code: MYSFMGGGLFCAWVGTILLVVAMATDHWMQYRLSGSFAHQGLWRYCLGNKCYLQTDSIAYWNATRAFMILSALCAISGIIMGIMAFAHQPTFSRISRPFSAGIMFFSSTLFVVLALAIYTGVTVSFLGRRFGDWRFSWSYILGWVAVLMTFFAGIFYMCAYRVHECRRLSTPR.

Residues 1–3 (MYS) are Cytoplasmic-facing. The helical transmembrane segment at 4-24 (FMGGGLFCAWVGTILLVVAMA) threads the bilayer. At 25-66 (TDHWMQYRLSGSFAHQGLWRYCLGNKCYLQTDSIAYWNATRA) the chain is on the extracellular side. 2 C-linked (Man) tryptophan glycosylation sites follow: Trp43 and Trp61. Residue Asn62 is glycosylated (N-linked (GlcNAc...) asparagine). Residues 67–87 (FMILSALCAISGIIMGIMAFA) traverse the membrane as a helical segment. The Cytoplasmic portion of the chain corresponds to 88–98 (HQPTFSRISRP). The chain crosses the membrane as a helical span at residues 99 to 119 (FSAGIMFFSSTLFVVLALAIY). Residues 120 to 140 (TGVTVSFLGRRFGDWRFSWSY) are Extracellular-facing. A helical membrane pass occupies residues 141 to 161 (ILGWVAVLMTFFAGIFYMCAY). The Cytoplasmic portion of the chain corresponds to 162–173 (RVHECRRLSTPR). The residue at position 170 (Ser170) is a Phosphoserine. The residue at position 171 (Thr171) is a Phosphothreonine.

The protein belongs to the PMP-22/EMP/MP20 family. As to quaternary structure, seems to be associated with itself or another lens membrane component via disulfide bonds. Eye lens specific.

It localises to the membrane. Present in the thicker 16-17 nm junctions of mammalian lens fiber cells, where it may contribute to cell junctional organization. Acts as a receptor for calmodulin. May play an important role in both lens development and cataractogenesis. This chain is Lens fiber membrane intrinsic protein (LIM2), found in Homo sapiens (Human).